Reading from the N-terminus, the 542-residue chain is Endonuclease 4 homolog (542 aa).

2 disordered regions span residues 89 to 123 (NEEI…QTSI) and 141 to 234 (PFFS…ENKF). 2 stretches are compositionally biased toward low complexity: residues 99–115 (SKKL…QQSK) and 147–170 (NNAS…TTTT). A coiled-coil region spans residues 171–206 (TKKRNNKDEENEDDNEEEEEEEEEEEDKKSKKKTTT). Over residues 179–196 (EENEDDNEEEEEEEEEEE) the composition is skewed to acidic residues. A compositionally biased stretch (low complexity) spans 205–215 (TTTTTTTTTTA). The segment covering 216 to 227 (YKKKSSPKKKKV) has biased composition (basic residues). The Nuclear localization signal signature appears at 222-227 (PKKKKV). Zn(2+)-binding residues include histidine 328, histidine 368, glutamate 404, aspartate 438, histidine 441, histidine 475, aspartate 488, histidine 490, and glutamate 520.

This sequence belongs to the AP endonuclease 2 family. Zn(2+) is required as a cofactor.

The protein localises to the nucleus. The catalysed reaction is Endonucleolytic cleavage to 5'-phosphooligonucleotide end-products.. Its function is as follows. Plays a role in DNA repair. It cleaves phosphodiester bonds at apurinic or apyrimidinic sites (AP sites) to produce new 5'-ends that are base-free deoxyribose 5-phosphate residues. The protein is Endonuclease 4 homolog (apnA) of Dictyostelium discoideum (Social amoeba).